We begin with the raw amino-acid sequence, 292 residues long: Glycine--tRNA ligase alpha subunit (292 aa).

It belongs to the class-II aminoacyl-tRNA synthetase family. Tetramer of two alpha and two beta subunits.

It is found in the cytoplasm. It carries out the reaction tRNA(Gly) + glycine + ATP = glycyl-tRNA(Gly) + AMP + diphosphate. This Synechococcus elongatus (strain ATCC 33912 / PCC 7942 / FACHB-805) (Anacystis nidulans R2) protein is Glycine--tRNA ligase alpha subunit.